Here is a 756-residue protein sequence, read N- to C-terminus: Conserved oligomeric Golgi complex subunit 2 (756 aa).

Residues 62–82 (RSELRSHLASLNRELVDLINR) are a coiled coil. The segment at 173–199 (WQNEDANSMGRSSMNDENSTQQDGTTM) is disordered.

Belongs to the COG2 family. In terms of assembly, homodimer. Component of the conserved oligomeric Golgi complex which is composed of eight different subunits and is required for normal Golgi morphology and localization. Binds to COG3 and COG4. Interacts with FPP3/VETH1 and FPP2/VETH2; this interaction promotes the association between cortical microtubules and EXO70A1. Binds to SEC15B, and, possibly, with EXO70A1, SEC3A and SEC10A.

It is found in the golgi apparatus membrane. Functionally, required for normal Golgi morphology and function. Ensures, when in complex with FPP3/VETH1 and FPP2/VETH2, the correct secondary cell wall (SCW) deposition pattern by recruiting exocyst components to cortical microtubules in xylem cells during secondary cell wall deposition. This is Conserved oligomeric Golgi complex subunit 2 from Arabidopsis thaliana (Mouse-ear cress).